The primary structure comprises 251 residues: Appressoria-specific virulence factor GAS1 (251 aa).

A signal peptide spans 1–21 (MSLKSLIAATILAAPLVAGHG). Positions 40–76 (VTSTPRDGTRRDPFQQDSTRFKGQQADTFGETVGGGQ) are disordered. The segment covering 54-66 (QQDSTRFKGQQAD) has biased composition (polar residues).

The protein resides in the cytoplasm. Its function is as follows. Appressoria-specific virulence factor required for appressorial penetration in host and lesion development. The protein is Appressoria-specific virulence factor GAS1 of Pyricularia oryzae (strain 70-15 / ATCC MYA-4617 / FGSC 8958) (Rice blast fungus).